The chain runs to 535 residues: T-complex protein 1 subunit epsilon (535 aa).

This sequence belongs to the TCP-1 chaperonin family. In terms of assembly, heterooligomeric complex of about 850 to 900 kDa that forms two stacked rings, 12 to 16 nm in diameter.

The protein localises to the cytoplasm. Functionally, molecular chaperone; assists the folding of proteins upon ATP hydrolysis. Known to play a role, in vitro, in the folding of actin and tubulin. In Arabidopsis thaliana (Mouse-ear cress), this protein is T-complex protein 1 subunit epsilon.